The primary structure comprises 305 residues: Homoserine O-acetyltransferase (305 aa).

Residue Cys142 is the Acyl-thioester intermediate of the active site. Residues Lys163 and Ser192 each contribute to the substrate site. His235 serves as the catalytic Proton acceptor. Glu237 is an active-site residue. Residue Arg249 coordinates substrate.

It belongs to the MetA family.

It is found in the cytoplasm. The catalysed reaction is L-homoserine + acetyl-CoA = O-acetyl-L-homoserine + CoA. It participates in amino-acid biosynthesis; L-methionine biosynthesis via de novo pathway; O-acetyl-L-homoserine from L-homoserine: step 1/1. In terms of biological role, transfers an acetyl group from acetyl-CoA to L-homoserine, forming acetyl-L-homoserine. The sequence is that of Homoserine O-acetyltransferase from Bacteroides thetaiotaomicron (strain ATCC 29148 / DSM 2079 / JCM 5827 / CCUG 10774 / NCTC 10582 / VPI-5482 / E50).